We begin with the raw amino-acid sequence, 370 residues long: 4-hydroxy-3-methylbut-2-en-1-yl diphosphate synthase (flavodoxin) (370 aa).

[4Fe-4S] cluster contacts are provided by C268, C271, C303, and E310.

The protein belongs to the IspG family. [4Fe-4S] cluster is required as a cofactor.

It catalyses the reaction (2E)-4-hydroxy-3-methylbut-2-enyl diphosphate + oxidized [flavodoxin] + H2O + 2 H(+) = 2-C-methyl-D-erythritol 2,4-cyclic diphosphate + reduced [flavodoxin]. It functions in the pathway isoprenoid biosynthesis; isopentenyl diphosphate biosynthesis via DXP pathway; isopentenyl diphosphate from 1-deoxy-D-xylulose 5-phosphate: step 5/6. In terms of biological role, converts 2C-methyl-D-erythritol 2,4-cyclodiphosphate (ME-2,4cPP) into 1-hydroxy-2-methyl-2-(E)-butenyl 4-diphosphate. The polypeptide is 4-hydroxy-3-methylbut-2-en-1-yl diphosphate synthase (flavodoxin) (Bacillus cereus (strain AH187)).